Here is a 406-residue protein sequence, read N- to C-terminus: Coenzyme A biosynthesis bifunctional protein CoaBC (406 aa).

The tract at residues 1-191 (MLNNRNVLLC…ETSAPLEGKH (191 aa)) is phosphopantothenoylcysteine decarboxylase. Cysteine 157 serves as the catalytic Proton donor. Residues 192–406 (VVITAGPTRE…ALSKQTGERS (215 aa)) are phosphopantothenate--cysteine ligase. CTP is bound by residues aspartate 281, lysine 291, phenylalanine 325, lysine 339, and lysine 343.

This sequence in the N-terminal section; belongs to the HFCD (homo-oligomeric flavin containing Cys decarboxylase) superfamily. The protein in the C-terminal section; belongs to the PPC synthetase family. Mg(2+) is required as a cofactor. FMN serves as cofactor.

It carries out the reaction N-[(R)-4-phosphopantothenoyl]-L-cysteine + H(+) = (R)-4'-phosphopantetheine + CO2. It catalyses the reaction (R)-4'-phosphopantothenate + L-cysteine + CTP = N-[(R)-4-phosphopantothenoyl]-L-cysteine + CMP + diphosphate + H(+). Its pathway is cofactor biosynthesis; coenzyme A biosynthesis; CoA from (R)-pantothenate: step 2/5. It functions in the pathway cofactor biosynthesis; coenzyme A biosynthesis; CoA from (R)-pantothenate: step 3/5. Catalyzes two sequential steps in the biosynthesis of coenzyme A. In the first step cysteine is conjugated to 4'-phosphopantothenate to form 4-phosphopantothenoylcysteine. In the second step the latter compound is decarboxylated to form 4'-phosphopantotheine. The chain is Coenzyme A biosynthesis bifunctional protein CoaBC from Bacillus subtilis (strain 168).